An 835-amino-acid chain; its full sequence is Protein translocase subunit SecA (835 aa).

ATP-binding positions include Gln-85, Gly-103–Thr-107, and Asp-492. A disordered region spans residues Val-788–Val-807. Cys-819, Cys-821, Cys-830, and Cys-831 together coordinate Zn(2+).

The protein belongs to the SecA family. In terms of assembly, monomer and homodimer. Part of the essential Sec protein translocation apparatus which comprises SecA, SecYEG and auxiliary proteins SecDF. Other proteins may also be involved. It depends on Zn(2+) as a cofactor.

Its subcellular location is the cell membrane. The protein resides in the cytoplasm. The enzyme catalyses ATP + H2O + cellular proteinSide 1 = ADP + phosphate + cellular proteinSide 2.. Its function is as follows. Part of the Sec protein translocase complex. Interacts with the SecYEG preprotein conducting channel. Has a central role in coupling the hydrolysis of ATP to the transfer of proteins into and across the cell membrane, serving as an ATP-driven molecular motor driving the stepwise translocation of polypeptide chains across the membrane. This chain is Protein translocase subunit SecA, found in Bacillus cereus (strain G9842).